Here is a 154-residue protein sequence, read N- to C-terminus: Telokin (154 aa).

Positions isoleucine 1–glutamate 24 are disordered. The span at serine 10 to asparagine 19 shows a compositional bias: polar residues. Residues proline 42–glutamate 133 form the Ig-like C2-type domain. The segment at threonine 134 to glutamate 154 is disordered. The span at glycine 141 to glutamate 154 shows a compositional bias: acidic residues.

It belongs to the protein kinase superfamily. CAMK Ser/Thr protein kinase family. Binds calmodulin.

Functionally, corresponds to the C-terminus of smooth muscle myosin light chain kinase. The sequence is that of Telokin from Meleagris gallopavo (Wild turkey).